Consider the following 536-residue polypeptide: Suppressor of cytokine signaling 5 (536 aa).

A required for interaction with IL4R region spans residues 1-50; it reads MDKVGKMWNNFKYRCQNLFGHEGGSRSENVDMNSNRCLSVKEKNISIGDS. Positions 115-175 are disordered; the sequence is SRHAPWGGKK…SVSSRTVGSR (61 aa). The segment covering 158-169 has biased composition (low complexity); it reads VSSVHDMDSVSS. The SH2 domain maps to 381-476; it reads CYWGVMDRYE…FFEPLLTISL (96 aa). One can recognise an SOCS box domain in the interval 471–520; the sequence is LLTISLNRTFPFSLQYICRAVICRCTTYDGIDGLPLPSMLQDFLKEYHYK.

As to quaternary structure, interacts with IL4R; inhibits IL4 signaling. Interacts with EGFR. Interacts with ELOB and ELOC; mediates EGFR ubiquitination and degradation. Post-translationally, phosphorylated. Phosphorylation is induced by EGF.

The protein operates within protein modification; protein ubiquitination. Functionally, SOCS family proteins form part of a classical negative feedback system that regulates cytokine signal transduction. May be a substrate-recognition component of a SCF-like ECS (Elongin BC-CUL2/5-SOCS-box protein) E3 ubiquitin-protein ligase complex which mediates the ubiquitination and subsequent proteasomal degradation of target proteins. Inhibits for instance EGF signaling by mediating the degradation of the EGF receptor/EGFR. Involved in the regulation of T-helper cell differentiation by inhibiting of the IL4 signaling pathway which promotes differentiation into the Th2 phenotype. Can also partially inhibit IL6 and LIF signaling. The polypeptide is Suppressor of cytokine signaling 5 (SOCS5) (Homo sapiens (Human)).